Here is a 254-residue protein sequence, read N- to C-terminus: Alcohol dehydrogenase (254 aa).

10–33 (FVAGLGGIGLDTSRELVKRDLKNL) contributes to the NAD(+) binding site. Substrate is bound at residue Ser138. Tyr151 (proton acceptor) is an active-site residue.

Belongs to the short-chain dehydrogenases/reductases (SDR) family. In terms of assembly, homodimer.

The catalysed reaction is a primary alcohol + NAD(+) = an aldehyde + NADH + H(+). It carries out the reaction a secondary alcohol + NAD(+) = a ketone + NADH + H(+). The polypeptide is Alcohol dehydrogenase (Adh) (Drosophila madeirensis (Fruit fly)).